The following is a 309-amino-acid chain: Small ribosomal subunit protein uS7m (309 aa).

Positions 39–86 are disordered; it reads DSTTSSRLPPRVQIQQQQQQRTQPYSTETTPPPNSNNGDLAGIEGQPP. The segment covering 51–61 has biased composition (low complexity); it reads QIQQQQQQRTQ.

This sequence belongs to the universal ribosomal protein uS7 family. As to quaternary structure, component of the mitochondrial small ribosomal subunit (mt-SSU). Mature N.crassa 74S mitochondrial ribosomes consist of a small (37S) and a large (54S) subunit. The 37S small subunit contains a 16S ribosomal RNA (16S mt-rRNA) and 32 different proteins. The 54S large subunit contains a 23S rRNA (23S mt-rRNA) and 42 different proteins.

The protein localises to the mitochondrion. Its function is as follows. Component of the mitochondrial ribosome (mitoribosome), a dedicated translation machinery responsible for the synthesis of mitochondrial genome-encoded proteins, including at least some of the essential transmembrane subunits of the mitochondrial respiratory chain. The mitoribosomes are attached to the mitochondrial inner membrane and translation products are cotranslationally integrated into the membrane. This is Small ribosomal subunit protein uS7m (rsm7) from Neurospora crassa (strain ATCC 24698 / 74-OR23-1A / CBS 708.71 / DSM 1257 / FGSC 987).